The sequence spans 408 residues: Tripartite motif-containing protein 59 (408 aa).

The RING-type zinc-finger motif lies at 10-60 (CSICYSLFEDPRVLPCSHTFCRSCLEGVIQLSSNFSIWRPLRVPLKCPNCR). A B box-type zinc finger spans residues 92 to 134 (SDVATCSEHYRQPLNVYCLLDKKLVCGHCLTIGKHNGHPIDDL). Zn(2+) is bound by residues C97, H100, C120, and H126. A coiled-coil region spans residues 163 to 247 (LIEKLKEQKA…LNTSIQKEES (85 aa)). A helical membrane pass occupies residues 333-353 (ANPLSVTFIFTVIIAIAVLSF).

The protein belongs to the TRIM/RBCC family. Interacts with ECSIT.

Its subcellular location is the endoplasmic reticulum membrane. May serve as a multifunctional regulator for innate immune signaling pathways. The protein is Tripartite motif-containing protein 59 (TRIM59) of Gallus gallus (Chicken).